Reading from the N-terminus, the 145-residue chain is 3-dehydroquinate dehydratase (145 aa).

The active-site Proton acceptor is tyrosine 24. Residues asparagine 75, histidine 81, and aspartate 88 each contribute to the substrate site. Catalysis depends on histidine 101, which acts as the Proton donor. Residues 102-103 and arginine 112 each bind substrate; that span reads IS.

It belongs to the type-II 3-dehydroquinase family. As to quaternary structure, homododecamer.

It carries out the reaction 3-dehydroquinate = 3-dehydroshikimate + H2O. It participates in metabolic intermediate biosynthesis; chorismate biosynthesis; chorismate from D-erythrose 4-phosphate and phosphoenolpyruvate: step 3/7. Its function is as follows. Catalyzes a trans-dehydration via an enolate intermediate. The protein is 3-dehydroquinate dehydratase (aroQ) of Corynebacterium glutamicum (strain ATCC 13032 / DSM 20300 / JCM 1318 / BCRC 11384 / CCUG 27702 / LMG 3730 / NBRC 12168 / NCIMB 10025 / NRRL B-2784 / 534).